Reading from the N-terminus, the 218-residue chain is Cytidylate kinase (218 aa).

7 to 15 (GPSASGKSS) lines the ATP pocket.

The protein belongs to the cytidylate kinase family. Type 1 subfamily.

It is found in the cytoplasm. It carries out the reaction CMP + ATP = CDP + ADP. The catalysed reaction is dCMP + ATP = dCDP + ADP. This chain is Cytidylate kinase, found in Borrelia hermsii (strain HS1 / DAH).